The following is a 242-amino-acid chain: DNA repair protein RecO (242 aa).

Belongs to the RecO family.

In terms of biological role, involved in DNA repair and RecF pathway recombination. In Vibrio atlanticus (strain LGP32) (Vibrio splendidus (strain Mel32)), this protein is DNA repair protein RecO.